The primary structure comprises 757 residues: RNA-directed RNA polymerase catalytic subunit (757 aa).

The segment at 50–82 (SEKGKWTTNTETGAPQLNPIDGPLPEDNEPSGY) is disordered. A compositionally biased stretch (polar residues) spans 55 to 64 (WTTNTETGAP). 2 consecutive short sequence motifs (nuclear localization signal) follow at residues 187–195 (RKRRVRDNM) and 203–216 (RTIG…NKRS). Residues 249–256 (RGFVYFVE) are promoter-binding site. The RdRp catalytic domain occupies 286–483 (VRKMMTNSQD…GINMTKKKSY (198 aa)).

This sequence belongs to the influenza viruses polymerase PB1 family. Influenza RNA polymerase is composed of three subunits: PB1, PB2 and PA. Interacts (via N-terminus) with PA (via C-terminus). Interacts (via C-terminus) with PB2 (via N-terminus); this interaction is essential for transcription initiation. In terms of processing, phosphorylated by host PRKCA.

It localises to the host nucleus. The protein localises to the host cytoplasm. It catalyses the reaction RNA(n) + a ribonucleoside 5'-triphosphate = RNA(n+1) + diphosphate. Its function is as follows. RNA-dependent RNA polymerase which is responsible for replication and transcription of virus RNA segments. The transcription of viral mRNAs occurs by a unique mechanism called cap-snatching. 5' methylated caps of cellular mRNAs are cleaved after 10-13 nucleotides by PA. In turn, these short capped RNAs are used as primers by PB1 for transcription of viral mRNAs. During virus replication, PB1 initiates RNA synthesis and copy vRNA into complementary RNA (cRNA) which in turn serves as a template for the production of more vRNAs. This chain is RNA-directed RNA polymerase catalytic subunit, found in Aves (Cat).